Reading from the N-terminus, the 186-residue chain is MARKENRDRDREERDSEFVDKLVHINRVAKVVKGGRRFGFAALVVVGDQKGRVGFGHGKAREVPEAIRKATEAAKRAMIRVPLREGRTLHHDVDGRHGAGRVVLRAAPPGTGIIAGGPMRAVFETLGVQDVVAKSLGSSNPYNMVRATFDALKNEQSPRMVAARRGKKVSEIVGRRSDAAAEAGLE.

Positions 18–81 constitute an S5 DRBM domain; sequence FVDKLVHINR…EAAKRAMIRV (64 aa).

It belongs to the universal ribosomal protein uS5 family. In terms of assembly, part of the 30S ribosomal subunit. Contacts proteins S4 and S8.

Its function is as follows. With S4 and S12 plays an important role in translational accuracy. Functionally, located at the back of the 30S subunit body where it stabilizes the conformation of the head with respect to the body. The protein is Small ribosomal subunit protein uS5 of Parvibaculum lavamentivorans (strain DS-1 / DSM 13023 / NCIMB 13966).